The primary structure comprises 494 residues: Ketol-acid reductoisomerase (NADP(+)) (494 aa).

The KARI N-terminal Rossmann domain maps to 14-208; it reads LDQIGRCRFM…GGDRAGVLES (195 aa). NADP(+) is bound by residues 45–48, R68, R76, S78, and 108–110; these read CGAQ and DKQ. Residue H132 is part of the active site. G158 serves as a coordination point for NADP(+). KARI C-terminal knotted domains are found at residues 209–344 and 345–487; these read SFVA…NAPE and YNGK…MTDM. D217, E221, E389, and E393 together coordinate Mg(2+). Residue S414 participates in substrate binding.

This sequence belongs to the ketol-acid reductoisomerase family. Mg(2+) is required as a cofactor.

It carries out the reaction (2R)-2,3-dihydroxy-3-methylbutanoate + NADP(+) = (2S)-2-acetolactate + NADPH + H(+). It catalyses the reaction (2R,3R)-2,3-dihydroxy-3-methylpentanoate + NADP(+) = (S)-2-ethyl-2-hydroxy-3-oxobutanoate + NADPH + H(+). It functions in the pathway amino-acid biosynthesis; L-isoleucine biosynthesis; L-isoleucine from 2-oxobutanoate: step 2/4. It participates in amino-acid biosynthesis; L-valine biosynthesis; L-valine from pyruvate: step 2/4. Its function is as follows. Involved in the biosynthesis of branched-chain amino acids (BCAA). Catalyzes an alkyl-migration followed by a ketol-acid reduction of (S)-2-acetolactate (S2AL) to yield (R)-2,3-dihydroxy-isovalerate. In the isomerase reaction, S2AL is rearranged via a Mg-dependent methyl migration to produce 3-hydroxy-3-methyl-2-ketobutyrate (HMKB). In the reductase reaction, this 2-ketoacid undergoes a metal-dependent reduction by NADPH to yield (R)-2,3-dihydroxy-isovalerate. In Pseudoalteromonas atlantica (strain T6c / ATCC BAA-1087), this protein is Ketol-acid reductoisomerase (NADP(+)).